We begin with the raw amino-acid sequence, 761 residues long: Xaa-Pro dipeptidyl-peptidase (761 aa).

Active-site charge relay system residues include S347, D467, and H497.

It belongs to the peptidase S15 family. In terms of assembly, homodimer.

Its subcellular location is the cytoplasm. It carries out the reaction Hydrolyzes Xaa-Pro-|- bonds to release unblocked, N-terminal dipeptides from substrates including Ala-Pro-|-p-nitroanilide and (sequentially) Tyr-Pro-|-Phe-Pro-|-Gly-Pro-|-Ile.. Functionally, removes N-terminal dipeptides sequentially from polypeptides having unsubstituted N-termini provided that the penultimate residue is proline. The chain is Xaa-Pro dipeptidyl-peptidase from Streptococcus agalactiae serotype Ia (strain ATCC 27591 / A909 / CDC SS700).